The chain runs to 323 residues: Aspartate carbamoyltransferase catalytic subunit (323 aa).

Carbamoyl phosphate contacts are provided by R61 and T62. K89 contacts L-aspartate. R111, H144, and Q147 together coordinate carbamoyl phosphate. Residues R184 and R238 each coordinate L-aspartate. The carbamoyl phosphate site is built by G279 and P280.

Belongs to the aspartate/ornithine carbamoyltransferase superfamily. ATCase family. In terms of assembly, heterododecamer (2C3:3R2) of six catalytic PyrB chains organized as two trimers (C3), and six regulatory PyrI chains organized as three dimers (R2).

The enzyme catalyses carbamoyl phosphate + L-aspartate = N-carbamoyl-L-aspartate + phosphate + H(+). It functions in the pathway pyrimidine metabolism; UMP biosynthesis via de novo pathway; (S)-dihydroorotate from bicarbonate: step 2/3. Its function is as follows. Catalyzes the condensation of carbamoyl phosphate and aspartate to form carbamoyl aspartate and inorganic phosphate, the committed step in the de novo pyrimidine nucleotide biosynthesis pathway. This chain is Aspartate carbamoyltransferase catalytic subunit, found in Acaryochloris marina (strain MBIC 11017).